The primary structure comprises 393 residues: MQFDNIDSALMALKNGETIIVVDDENRENEGDLVAVTEWMNDNTINFMAKEARGLICAPVSKDIAQRLDLVQMVDDNSDIFGTQFTVSIDHVDTTTGISAYERTLTAKKLIDPSSEAKDFNRPGHLFPLVAQDKGVLARNGHTEAAVDLAKLTGAKPAGVICEIMNDDGTMAKGQDLQKFKEKHKLKMITIDDLIEYRKKLEPEIEFKAKVKMPTDFGTFDMYGFKATYTDEEIVVLTKGAIRQHENVRLHSACLTGDIFHSQRCDCGAQLESSMKYINEHGGMIIYLPQEGRGIGLLNKLRAYELIEQGYDTVTANLALGFDEDLRDYHIAAQILKYFNIEHINLLSNNPSKFEGLKQYGIDIAERIEVIVPETVHNHDYMETKKIKMGHLI.

A DHBP synthase region spans residues 1–200 (MQFDNIDSAL…IDDLIEYRKK (200 aa)). D-ribulose 5-phosphate contacts are provided by residues 27–28 (RE), Asp32, 139–143 (RNGHT), and Glu163. Glu28 is a Mg(2+) binding site. Residue His142 participates in Mg(2+) binding. Residues 201 to 393 (LEPEIEFKAK…TKKIKMGHLI (193 aa)) are GTP cyclohydrolase II. 249–253 (RLHSA) contacts GTP. Residues Cys254, Cys265, and Cys267 each coordinate Zn(2+). Residues Gln270, 291 to 293 (EGR), and Thr313 contribute to the GTP site. The active-site Proton acceptor; for GTP cyclohydrolase activity is the Asp325. The Nucleophile; for GTP cyclohydrolase activity role is filled by Arg327. GTP-binding residues include Ser348 and Lys353.

It in the N-terminal section; belongs to the DHBP synthase family. The protein in the C-terminal section; belongs to the GTP cyclohydrolase II family. The cofactor is Mg(2+). Mn(2+) is required as a cofactor. It depends on Zn(2+) as a cofactor.

The enzyme catalyses D-ribulose 5-phosphate = (2S)-2-hydroxy-3-oxobutyl phosphate + formate + H(+). It catalyses the reaction GTP + 4 H2O = 2,5-diamino-6-hydroxy-4-(5-phosphoribosylamino)-pyrimidine + formate + 2 phosphate + 3 H(+). The protein operates within cofactor biosynthesis; riboflavin biosynthesis; 2-hydroxy-3-oxobutyl phosphate from D-ribulose 5-phosphate: step 1/1. It participates in cofactor biosynthesis; riboflavin biosynthesis; 5-amino-6-(D-ribitylamino)uracil from GTP: step 1/4. In terms of biological role, catalyzes the conversion of D-ribulose 5-phosphate to formate and 3,4-dihydroxy-2-butanone 4-phosphate. Catalyzes the conversion of GTP to 2,5-diamino-6-ribosylamino-4(3H)-pyrimidinone 5'-phosphate (DARP), formate and pyrophosphate. The protein is Riboflavin biosynthesis protein RibBA of Staphylococcus aureus (strain MRSA252).